A 396-amino-acid chain; its full sequence is MQNMVILGATGSIGASTLSVISANPFAYSVYGLVANASVDKMLALCVAHKPKVAHMVDEAAAKQLRAVLPATLNIQVTTGMNDLLGLVTAAEVDTVMAAIVGAAGLVPTLEAVKAGKRVLLANKEALVMSGELFIEATKRSGAVLLPVDSEHNAIFQCLPQEVQANLGRCDLAASGISHILLTGSGGPFLRSDLATLAAMTPAQACKHPNWSMGPKISVDSATMMNKGLEFIEARWLFNTQAEQLKVVIHPQSVIHSMVQYRDGSVIAQMGNPDMRTPIAHCMAYPQRIHSGVEPLDFFKVGQLSFYEPDFERFPCLALAMDACAQGQEATTVLNAANEIAVEAFLQGQIGFTQIAKVNEACLVTVPKCPMGSIEDILALDAQTRVYARETLASIA.

NADPH is bound by residues threonine 10, glycine 11, serine 12, isoleucine 13, and asparagine 123. Lysine 124 is a 1-deoxy-D-xylulose 5-phosphate binding site. Glutamate 125 provides a ligand contact to NADPH. Aspartate 149 serves as a coordination point for Mn(2+). 4 residues coordinate 1-deoxy-D-xylulose 5-phosphate: serine 150, glutamate 151, serine 185, and histidine 208. Glutamate 151 lines the Mn(2+) pocket. Residue glycine 214 participates in NADPH binding. Residues serine 221, asparagine 226, lysine 227, and glutamate 230 each coordinate 1-deoxy-D-xylulose 5-phosphate. Residue glutamate 230 coordinates Mn(2+).

Belongs to the DXR family. Mg(2+) is required as a cofactor. The cofactor is Mn(2+).

It catalyses the reaction 2-C-methyl-D-erythritol 4-phosphate + NADP(+) = 1-deoxy-D-xylulose 5-phosphate + NADPH + H(+). It participates in isoprenoid biosynthesis; isopentenyl diphosphate biosynthesis via DXP pathway; isopentenyl diphosphate from 1-deoxy-D-xylulose 5-phosphate: step 1/6. In terms of biological role, catalyzes the NADPH-dependent rearrangement and reduction of 1-deoxy-D-xylulose-5-phosphate (DXP) to 2-C-methyl-D-erythritol 4-phosphate (MEP). This is 1-deoxy-D-xylulose 5-phosphate reductoisomerase from Shewanella baltica (strain OS155 / ATCC BAA-1091).